We begin with the raw amino-acid sequence, 77 residues long: Large ribosomal subunit protein eL14 (77 aa).

This sequence belongs to the eukaryotic ribosomal protein eL14 family.

This chain is Large ribosomal subunit protein eL14, found in Methanococcus vannielii (strain ATCC 35089 / DSM 1224 / JCM 13029 / OCM 148 / SB).